The sequence spans 323 residues: Beta-ketoacyl-[acyl-carrier-protein] synthase III (323 aa).

Active-site residues include Cys-114 and His-250. Residues 251–255 (QANRR) form an ACP-binding region. The active site involves Asn-280.

Belongs to the thiolase-like superfamily. FabH family. Homodimer.

It is found in the cytoplasm. The catalysed reaction is malonyl-[ACP] + acetyl-CoA + H(+) = 3-oxobutanoyl-[ACP] + CO2 + CoA. The protein operates within lipid metabolism; fatty acid biosynthesis. Catalyzes the condensation reaction of fatty acid synthesis by the addition to an acyl acceptor of two carbons from malonyl-ACP. Catalyzes the first condensation reaction which initiates fatty acid synthesis and may therefore play a role in governing the total rate of fatty acid production. Possesses both acetoacetyl-ACP synthase and acetyl transacylase activities. Its substrate specificity determines the biosynthesis of branched-chain and/or straight-chain of fatty acids. The polypeptide is Beta-ketoacyl-[acyl-carrier-protein] synthase III (Rhodospirillum centenum (strain ATCC 51521 / SW)).